The following is a 229-amino-acid chain: Geodin cluster transcription factor (229 aa).

Residues 12–39 constitute a DNA-binding region (zn(2)-C6 fungal-type); it reads CHACAASKVRCSKEKPTCSRCSKRGTTC. Disordered stretches follow at residues 50–100 and 141–169; these read KQLN…PGTT and TANS…RPPT. Composition is skewed to polar residues over residues 51 to 71 and 153 to 164; these read QLNN…SLAT and ITSSHNTSSNSP.

It is found in the nucleus. In terms of biological role, transcription factor that regulates the expression of the gene cluster that mediates the biosynthesis of geodin, an intermediate in the biosynthesis of other natural products. This chain is Geodin cluster transcription factor, found in Aspergillus terreus (strain NIH 2624 / FGSC A1156).